The chain runs to 357 residues: P2Y purinoceptor 8 (357 aa).

Residues 1 to 26 (MVKNGSHLDAETLAMLQNKAISITLP) lie on the Extracellular side of the membrane. N-linked (GlcNAc...) asparagine glycosylation occurs at Asn4. Residues 27–47 (VVYTMVAIISIPGNFFSLWVL) form a helical membrane-spanning segment. Residues 48–56 (CWHIKPKTP) are Cytoplasmic-facing. The helical transmembrane segment at 57-77 (SVIFMINLSITDLLLACCFPF) threads the bilayer. Over 78–97 (QIFYHIQRNHWIFGKTLCSL) the chain is Extracellular. Cys95 and Cys174 are joined by a disulfide. The chain crosses the membrane as a helical span at residues 98–118 (VTVMFYSNMYSSILTMTCISI). At 119-137 (ERYMGVVYPMKLIKWRRKR) the chain is on the cytoplasmic side. Residues 138–158 (YALGACVIMWIFLLLAFYPLE) form a helical membrane-spanning segment. Over 159–185 (STDLTYEVKELGIITCFDVLKWEMLPN) the chain is Extracellular. The helical transmembrane segment at 186–206 (FAAWVAFLLTLFVVLFLIPFI) threads the bilayer. The Cytoplasmic portion of the chain corresponds to 207 to 236 (VTVGCYIGTIRKLIQTSSRYGNKQKTRSIY). A helical transmembrane segment spans residues 237-257 (LAIIVLSVFITCFAPNNFILL). The Extracellular segment spans residues 258–271 (AHMIVRLFYEGSLY). A helical membrane pass occupies residues 272–294 (PAYKLTLCLSCLNNCIDPFIYYF). Residues 295–357 (ASKEFYQKFM…ICLQRQESVF (63 aa)) lie on the Cytoplasmic side of the membrane.

Belongs to the G-protein coupled receptor 1 family.

It is found in the cell membrane. In terms of biological role, probable receptor for purines coupled to G-proteins. The protein is P2Y purinoceptor 8 (P2RY8) of Gallus gallus (Chicken).